The primary structure comprises 437 residues: Lipid II isoglutaminyl synthase (glutamine-hydrolyzing) subunit MurT (437 aa).

Cys202, Cys205, Cys224, and Cys226 together coordinate Zn(2+). Asp349 is an active-site residue.

The protein belongs to the MurCDEF family. MurT subfamily. As to quaternary structure, forms a heterodimer with GatD.

It catalyses the reaction beta-D-GlcNAc-(1-&gt;4)-Mur2Ac(oyl-L-Ala-gamma-D-Glu-L-Lys-D-Ala-D-Ala)-di-trans,octa-cis-undecaprenyl diphosphate + L-glutamine + ATP + H2O = beta-D-GlcNAc-(1-&gt;4)-Mur2Ac(oyl-L-Ala-D-isoglutaminyl-L-Lys-D-Ala-D-Ala)-di-trans,octa-cis-undecaprenyl diphosphate + L-glutamate + ADP + phosphate + H(+). The catalysed reaction is beta-D-GlcNAc-(1-&gt;4)-Mur2Ac(oyl-L-Ala-gamma-D-Glu-L-Lys-D-Ala-D-Ala)-di-trans,octa-cis-undecaprenyl diphosphate + ATP = beta-D-GlcNAc-(1-&gt;4)-Mur2Ac(oyl-L-Ala-gamma-D-O-P-Glu-L-Lys-D-Ala-D-Ala)-di-trans,octa-cis-undecaprenyl diphosphate + ADP. It carries out the reaction beta-D-GlcNAc-(1-&gt;4)-Mur2Ac(oyl-L-Ala-gamma-D-O-P-Glu-L-Lys-D-Ala-D-Ala)-di-trans,octa-cis-undecaprenyl diphosphate + NH4(+) = beta-D-GlcNAc-(1-&gt;4)-Mur2Ac(oyl-L-Ala-D-isoglutaminyl-L-Lys-D-Ala-D-Ala)-di-trans,octa-cis-undecaprenyl diphosphate + phosphate + H(+). It participates in cell wall biogenesis; peptidoglycan biosynthesis. Functionally, the lipid II isoglutaminyl synthase complex catalyzes the formation of alpha-D-isoglutamine in the cell wall lipid II stem peptide. The MurT subunit catalyzes the ATP-dependent amidation of D-glutamate residue of lipid II, converting it to an isoglutamine residue. This Staphylococcus aureus (strain COL) protein is Lipid II isoglutaminyl synthase (glutamine-hydrolyzing) subunit MurT.